A 614-amino-acid polypeptide reads, in one-letter code: Pyrophosphate--fructose 6-phosphate 1-phosphotransferase subunit alpha 1 (614 aa).

It belongs to the phosphofructokinase type A (PFKA) family. PPi-dependent PFK group II subfamily. Clade 'Long' sub-subfamily. In terms of assembly, tetramer of two alpha (regulatory) and two beta (catalytic) chains. In terms of tissue distribution, expressed in leaves, roots, and flowers (e.g. sepals, petals, stamen and gynoecium).

The protein localises to the cytoplasm. Its pathway is carbohydrate degradation; glycolysis; D-glyceraldehyde 3-phosphate and glycerone phosphate from D-glucose: step 3/4. With respect to regulation, allosterically activated by fructose 2,6-bisphosphate. Its function is as follows. Regulatory subunit of pyrophosphate--fructose 6-phosphate 1-phosphotransferase. The protein is Pyrophosphate--fructose 6-phosphate 1-phosphotransferase subunit alpha 1 of Arabidopsis thaliana (Mouse-ear cress).